A 68-amino-acid chain; its full sequence is Palustrin-1c (68 aa).

The signal sequence occupies residues 1-22 (MFTTKKSLLLLFFLGTISLSLC). Positions 23 to 39 (EEERGADEEEGDGEKLT) are excised as a propeptide. Cysteine 62 and cysteine 68 are oxidised to a cystine.

In terms of tissue distribution, expressed by the skin glands.

The protein resides in the secreted. Its function is as follows. Antimicrobial activity against Gram-negative bacterium E.coli. Stimulates insulin release. This is Palustrin-1c from Lithobates palustris (Pickerel frog).